A 129-amino-acid polypeptide reads, in one-letter code: Small ribosomal subunit protein uS11 (129 aa).

Belongs to the universal ribosomal protein uS11 family. Part of the 30S ribosomal subunit. Interacts with proteins S7 and S18. Binds to IF-3.

Functionally, located on the platform of the 30S subunit, it bridges several disparate RNA helices of the 16S rRNA. Forms part of the Shine-Dalgarno cleft in the 70S ribosome. The chain is Small ribosomal subunit protein uS11 from Synechococcus sp. (strain RCC307).